The sequence spans 245 residues: DNA polymerase sliding clamp 2 (245 aa).

It belongs to the PCNA family. Forms homodimers with PCNA1, which then recruit PCNA3; does not form homotrimers. The heterodimers interact with RfcS homotetramers. Heterotrimer which circularizes head-to-tail (head is at N-terminus, tail is at C-terminus) to form a toroid; DNA passes through its center. Replication factor C (RFC) is required to load the toroid on the DNA. This subunit interacts with DNA polymerase I (dpo1). The heterotrimer also interacts with flap endonuclease 1, DNA ligase and XPF via the other subunits.

In terms of biological role, one of the sliding clamp subunits that acts as a moving platform for DNA processing. Responsible for tethering the catalytic subunit of DNA polymerase to DNA during high-speed replication. Heterotrimer stimulates the Holliday junction resolvase Hjc. DNA polymerase I, DNA ligase and the flap endonuclease may be constitutively associated with the PCNA heterotrimer forming a scanning complex able to couple DNA synthesis and Okazaki fragment maturation. This is DNA polymerase sliding clamp 2 from Saccharolobus solfataricus (strain ATCC 35092 / DSM 1617 / JCM 11322 / P2) (Sulfolobus solfataricus).